Consider the following 54-residue polypeptide: Large ribosomal subunit protein bL32c (54 aa).

Residues 1-20 (MAVPKKRVSKSKRDMRKTTW) are compositionally biased toward basic residues. The disordered stretch occupies residues 1–54 (MAVPKKRVSKSKRDMRKTTWKNKASKEAKKALSLAKSVSTGKSKSKGFQIKSSN). Positions 31 to 42 (ALSLAKSVSTGK) are enriched in low complexity.

Belongs to the bacterial ribosomal protein bL32 family.

Its subcellular location is the plastid. The protein resides in the chloroplast. This Chlorokybus atmophyticus (Soil alga) protein is Large ribosomal subunit protein bL32c.